Reading from the N-terminus, the 422-residue chain is L-threonine dehydratase biosynthetic IlvA (422 aa).

Lysine 56 is modified (N6-(pyridoxal phosphate)lysine). Pyridoxal 5'-phosphate contacts are provided by residues asparagine 83, 189–193, and serine 315; that span reads GGGGL. The region spanning 339–413 is the ACT-like domain; sequence HYFILNFPQR…FDPSNIYINE (75 aa).

This sequence belongs to the serine/threonine dehydratase family. Homotetramer. It depends on pyridoxal 5'-phosphate as a cofactor.

The enzyme catalyses L-threonine = 2-oxobutanoate + NH4(+). Its pathway is amino-acid biosynthesis; L-isoleucine biosynthesis; 2-oxobutanoate from L-threonine: step 1/1. In terms of biological role, catalyzes the anaerobic formation of alpha-ketobutyrate and ammonia from threonine in a two-step reaction. The first step involved a dehydration of threonine and a production of enamine intermediates (aminocrotonate), which tautomerizes to its imine form (iminobutyrate). Both intermediates are unstable and short-lived. The second step is the nonenzymatic hydrolysis of the enamine/imine intermediates to form 2-ketobutyrate and free ammonia. In the low water environment of the cell, the second step is accelerated by RidA. This chain is L-threonine dehydratase biosynthetic IlvA (ilvA), found in Staphylococcus aureus (strain MSSA476).